The sequence spans 148 residues: Lysozyme C (148 aa).

Residues 1–18 (MKVLILLGLVLLSVMVQG) form the signal peptide. Residues 19-148 (KVFERCELAR…VSQYIQGCGV (130 aa)) form the C-type lysozyme domain. 4 disulfide bridges follow: cysteine 24–cysteine 146, cysteine 48–cysteine 134, cysteine 83–cysteine 99, and cysteine 95–cysteine 113. Active-site residues include glutamate 53 and aspartate 71.

The protein belongs to the glycosyl hydrolase 22 family. Monomer.

It is found in the secreted. The enzyme catalyses Hydrolysis of (1-&gt;4)-beta-linkages between N-acetylmuramic acid and N-acetyl-D-glucosamine residues in a peptidoglycan and between N-acetyl-D-glucosamine residues in chitodextrins.. Functionally, lysozymes have primarily a bacteriolytic function; those in tissues and body fluids are associated with the monocyte-macrophage system and enhance the activity of immunoagents. This Saguinus oedipus (Cotton-top tamarin) protein is Lysozyme C (LYZ).